A 236-amino-acid polypeptide reads, in one-letter code: Large ribosomal subunit protein uL1 (236 aa).

The protein belongs to the universal ribosomal protein uL1 family. As to quaternary structure, part of the 50S ribosomal subunit.

Binds directly to 23S rRNA. The L1 stalk is quite mobile in the ribosome, and is involved in E site tRNA release. Functionally, protein L1 is also a translational repressor protein, it controls the translation of the L11 operon by binding to its mRNA. This chain is Large ribosomal subunit protein uL1, found in Corynebacterium efficiens (strain DSM 44549 / YS-314 / AJ 12310 / JCM 11189 / NBRC 100395).